We begin with the raw amino-acid sequence, 342 residues long: Nucleoid-associated protein SO_2177 (342 aa).

The protein belongs to the YejK family.

It is found in the cytoplasm. Its subcellular location is the nucleoid. The sequence is that of Nucleoid-associated protein SO_2177 from Shewanella oneidensis (strain ATCC 700550 / JCM 31522 / CIP 106686 / LMG 19005 / NCIMB 14063 / MR-1).